Here is a 163-residue protein sequence, read N- to C-terminus: NADH-quinone oxidoreductase subunit I (163 aa).

4Fe-4S ferredoxin-type domains are found at residues 54-84 and 94-123; these read LRRYPNGEERCIACKLCEAVCPALAITIESD and TRYDIDLTKCIFCGFCEEACPVDAVVETPI. Residues Cys-64, Cys-67, Cys-70, Cys-74, Cys-103, Cys-106, Cys-109, and Cys-113 each contribute to the [4Fe-4S] cluster site.

The protein belongs to the complex I 23 kDa subunit family. In terms of assembly, NDH-1 is composed of 14 different subunits. Subunits NuoA, H, J, K, L, M, N constitute the membrane sector of the complex. Requires [4Fe-4S] cluster as cofactor.

It localises to the cell inner membrane. It carries out the reaction a quinone + NADH + 5 H(+)(in) = a quinol + NAD(+) + 4 H(+)(out). Functionally, NDH-1 shuttles electrons from NADH, via FMN and iron-sulfur (Fe-S) centers, to quinones in the respiratory chain. The immediate electron acceptor for the enzyme in this species is believed to be ubiquinone. Couples the redox reaction to proton translocation (for every two electrons transferred, four hydrogen ions are translocated across the cytoplasmic membrane), and thus conserves the redox energy in a proton gradient. The polypeptide is NADH-quinone oxidoreductase subunit I (Cupriavidus pinatubonensis (strain JMP 134 / LMG 1197) (Cupriavidus necator (strain JMP 134))).